Reading from the N-terminus, the 621-residue chain is tRNA uridine 5-carboxymethylaminomethyl modification enzyme MnmG (621 aa).

8–13 (GAGHAG) serves as a coordination point for FAD. NAD(+) is bound at residue 269–283 (GPRYCPSVEDKIFRF).

It belongs to the MnmG family. In terms of assembly, homodimer. Heterotetramer of two MnmE and two MnmG subunits. FAD is required as a cofactor.

The protein localises to the cytoplasm. NAD-binding protein involved in the addition of a carboxymethylaminomethyl (cmnm) group at the wobble position (U34) of certain tRNAs, forming tRNA-cmnm(5)s(2)U34. This Chlorobium chlorochromatii (strain CaD3) protein is tRNA uridine 5-carboxymethylaminomethyl modification enzyme MnmG.